The primary structure comprises 250 residues: MSILFISDVHLSTKSPYITDGFLRFLSYRAMRAKALYILGDLFETWLGDDDYNLLHINIAKALKALNQRRISCYFIHGNHDFLLGQRYARACGMTLLSSNQVLKLASGKKIIILHGDILCANDNSYQLFRKYLRHIIVQRLFLSLPLSIRSRIFSAIRSCCVQHTKYKSKKKLNINLKIATDMLIQNNADIMIHGHTHQPAIHKIYRSKKNVFRIIVLGCWNKYGSMIEVNEKNNDILFTEFPLYEITKY.

Residues aspartate 8, histidine 10, aspartate 41, asparagine 79, and histidine 115 each coordinate Mn(2+). Residue 79–80 participates in substrate binding; it reads NH. Substrate-binding residues include aspartate 123, threonine 165, lysine 168, and histidine 196. Mn(2+) contacts are provided by histidine 196 and histidine 198.

Belongs to the LpxH family. Mn(2+) serves as cofactor.

It localises to the cell inner membrane. It catalyses the reaction UDP-2-N,3-O-bis[(3R)-3-hydroxytetradecanoyl]-alpha-D-glucosamine + H2O = 2-N,3-O-bis[(3R)-3-hydroxytetradecanoyl]-alpha-D-glucosaminyl 1-phosphate + UMP + 2 H(+). It participates in glycolipid biosynthesis; lipid IV(A) biosynthesis; lipid IV(A) from (3R)-3-hydroxytetradecanoyl-[acyl-carrier-protein] and UDP-N-acetyl-alpha-D-glucosamine: step 4/6. Its function is as follows. Hydrolyzes the pyrophosphate bond of UDP-2,3-diacylglucosamine to yield 2,3-diacylglucosamine 1-phosphate (lipid X) and UMP by catalyzing the attack of water at the alpha-P atom. Involved in the biosynthesis of lipid A, a phosphorylated glycolipid that anchors the lipopolysaccharide to the outer membrane of the cell. The polypeptide is UDP-2,3-diacylglucosamine hydrolase (Blochmanniella pennsylvanica (strain BPEN)).